Reading from the N-terminus, the 536-residue chain is Chaperonin GroEL (536 aa).

ATP-binding positions include 29 to 32, 86 to 90, Gly413, and Asp494; these read TLGP and DGTTT.

It belongs to the chaperonin (HSP60) family. As to quaternary structure, forms a cylinder of 14 subunits composed of two heptameric rings stacked back-to-back. Interacts with the co-chaperonin GroES.

Its subcellular location is the cytoplasm. The catalysed reaction is ATP + H2O + a folded polypeptide = ADP + phosphate + an unfolded polypeptide.. Functionally, together with its co-chaperonin GroES, plays an essential role in assisting protein folding. The GroEL-GroES system forms a nano-cage that allows encapsulation of the non-native substrate proteins and provides a physical environment optimized to promote and accelerate protein folding. The protein is Chaperonin GroEL of Acholeplasma laidlawii (strain PG-8A).